The chain runs to 429 residues: Phenylalanine--tRNA ligase, chloroplastic/mitochondrial (429 aa).

The transit peptide at 1–53 directs the protein to the chloroplast and mitochondrion; it reads MTVFSVQSTIFSRASVALLSSNGFKRFSFVSSFSSSAAYSPPKMRKRRYPIVS. Position 54 is an N-acetylalanine (Ala-54). Substrate-binding positions include 163–166, Arg-185, 192–194, 199–201, Glu-269, and Phe-294; these read SAHQ, THY, and QME. The 92-residue stretch at 338-429 folds into the FDX-ACB domain; the sequence is SKYPPCYKDI…VQKKLNVELR (92 aa).

This sequence belongs to the class-II aminoacyl-tRNA synthetase family. Monomer.

Its subcellular location is the plastid. The protein resides in the chloroplast stroma. It localises to the mitochondrion matrix. It catalyses the reaction tRNA(Phe) + L-phenylalanine + ATP = L-phenylalanyl-tRNA(Phe) + AMP + diphosphate + H(+). In terms of biological role, is responsible for the charging of tRNA(Phe) with phenylalanine in mitochondrial translation. The polypeptide is Phenylalanine--tRNA ligase, chloroplastic/mitochondrial (Arabidopsis thaliana (Mouse-ear cress)).